Here is a 118-residue protein sequence, read N- to C-terminus: Ribosome-binding factor A (118 aa).

Belongs to the RbfA family. Monomer. Binds 30S ribosomal subunits, but not 50S ribosomal subunits or 70S ribosomes.

The protein resides in the cytoplasm. Its function is as follows. One of several proteins that assist in the late maturation steps of the functional core of the 30S ribosomal subunit. Associates with free 30S ribosomal subunits (but not with 30S subunits that are part of 70S ribosomes or polysomes). Required for efficient processing of 16S rRNA. May interact with the 5'-terminal helix region of 16S rRNA. This chain is Ribosome-binding factor A, found in Shouchella clausii (strain KSM-K16) (Alkalihalobacillus clausii).